The following is a 363-amino-acid chain: MAFVASVPVFANASGLKTEAKVCQKPALKNSFFRGEEVTSRSFFASQAVSAKPATTFEVDTTIRAQAVDAKKKGDIPLNLFRPANPYIGKCIYNERIVGEGAPGETKHIIFTHEGKVPYLEGQSIGIIPPGTDKDGKPHKLRLYSIASTRHGDFGDDKTVSLSVKRLEYTDANGNLVKGVCSNYLCDLKPGDEVMITGPVGTTMLMPEDQSATIIMLATGTGIAPFRSFLRRMFEETHADYKFNGLAWLFLGVPTSSTLLYREELEKMQKANPNNFRLDYAISREQTDSKGEKMYIQNRIAEYANEFWNMIQKPNTFVYMCGLRGMEDGIQQCMEDIAKANGTTWDAVVKGLKKEKRWHVETY.

A cyanelle-targeting transit peptide spans 1-65; sequence MAFVASVPVF…TFEVDTTIRA (65 aa). One can recognise an FAD-binding FR-type domain in the interval 84–206; the sequence is ANPYIGKCIY…TGPVGTTMLM (123 aa). Residues 142–145, 163–165, Y169, 180–182, and T221 each bind FAD; these read RLYS, SVK, and VCS. 2 residues coordinate NADP(+): S145 and K165. NADP(+)-binding positions include T221, 253–254, 283–284, K293, 322–323, and E361; these read VP, SR, and GL.

Belongs to the ferredoxin--NADP reductase type 1 family. It depends on FAD as a cofactor.

It localises to the plastid. Its subcellular location is the cyanelle stroma. It is found in the cyanelle thylakoid membrane. The enzyme catalyses 2 reduced [2Fe-2S]-[ferredoxin] + NADP(+) + H(+) = 2 oxidized [2Fe-2S]-[ferredoxin] + NADPH. Functionally, may play a key role in regulating the relative amounts of cyclic and non-cyclic electron flow to meet the demands of the plant for ATP and reducing power. This Cyanophora paradoxa protein is Ferredoxin--NADP reductase, cyanelle (PETH).